A 738-amino-acid chain; its full sequence is MTDAPFDRADIDALLGARHPDPFACLGPHRVGDATVVRTLLPGALRVRAIAAGGGVLGELRQVDPAGCFAGALPDGRERGERPRYRLSIDWPDARQDVEDAYAFGTLLDEDALARFAAGDPRAALACLGARALDMDGVPGVRFAVWAPGASRVSVVGDFNGWDARRHPMRLRRPWGVWELFVPRIGAGERYKFALRARDGAALPLKADPCACRTEAPPRTASIVADLDALERFGWHDDAWLRARASLDLAHAPVSIYEVHPESWLRVAAEGNRSATWDELAQRLIPYAAGMGFSHVELTPIAEYPFGGSWGYQSLSPFAPSARFGPPEGFARFVEHAHAAGLGVIVDWVPAHFPDDPHGLGKFDGTALFEHADPREGWHPDWHTHVFNVGRREVGAFLIASALAWAHRYHVDGIRVDAVASMLYRDYSRAAGEWVPNVYGGRENLESIAFLKHFNDTLHGPAAPPGVATFAEESTAWPGVTAPTAEHGLGFDFKWNMGWMHDTLAYLREDPIHRRHHHDRLTFGLVYAFSERFVLPLSHDEVVHGKGSLAAKMPGDAWQRLANLRAYFGFMWAHPGKKLLFMGGEFAQWEEFAHDATPQWDLLDAPAHRGVQRLVRDLNRLHAAEPALHALDDRPAGFAWLVGDDRNNSVFAFVRRDDAGRMLVAVCNFTPVPRTDYRLGLPAPGRWAEVLNTDGAAYGGTDAGNGGAVQADEIPAHGERWSAALRLPPLATLWLRPA.

The active-site Nucleophile is Asp417. Glu472 (proton donor) is an active-site residue.

It belongs to the glycosyl hydrolase 13 family. GlgB subfamily. As to quaternary structure, monomer.

The enzyme catalyses Transfers a segment of a (1-&gt;4)-alpha-D-glucan chain to a primary hydroxy group in a similar glucan chain.. Its pathway is glycan biosynthesis; glycogen biosynthesis. Functionally, catalyzes the formation of the alpha-1,6-glucosidic linkages in glycogen by scission of a 1,4-alpha-linked oligosaccharide from growing alpha-1,4-glucan chains and the subsequent attachment of the oligosaccharide to the alpha-1,6 position. The sequence is that of 1,4-alpha-glucan branching enzyme GlgB from Burkholderia pseudomallei (strain 668).